The following is a 224-amino-acid chain: MNILIFGPPGSGKSTHSRTIMEKYGLVYISSGDLIRREIERKSSLGREMEAYLSRGDLIPDTIVNTLIISKLRRQRENFILDGYPRTPEQVISLENYLFDHGIKLDLALEIFIDEDTSVERISGRRICPNCGAVYHVKYNPPKVPGICDVCGSELIQRADDREEVVRKRYRIYSKNMEPIIKFYRAKGIYVRVDGDGPISEVWKRIQPLLDYIHSREEKRKEHE.

10 to 15 (GSGKST) lines the ATP pocket. Residues 30 to 59 (SSGDLIRREIERKSSLGREMEAYLSRGDLI) are NMP. Residues Ser31, Arg36, 57 to 59 (DLI), 83 to 86 (GYPR), and Gln90 each bind AMP. Positions 124–161 (GRRICPNCGAVYHVKYNPPKVPGICDVCGSELIQRADD) are LID. Arg125 provides a ligand contact to ATP. Positions 128 and 131 each coordinate Zn(2+). 134-135 (VY) contributes to the ATP binding site. Positions 148 and 151 each coordinate Zn(2+). AMP is bound by residues Arg158 and Arg169. An ATP-binding site is contributed by Gly197.

It belongs to the adenylate kinase family. Monomer.

The protein localises to the cytoplasm. The enzyme catalyses AMP + ATP = 2 ADP. It functions in the pathway purine metabolism; AMP biosynthesis via salvage pathway; AMP from ADP: step 1/1. In terms of biological role, catalyzes the reversible transfer of the terminal phosphate group between ATP and AMP. Plays an important role in cellular energy homeostasis and in adenine nucleotide metabolism. The sequence is that of Adenylate kinase from Thermococcus kodakarensis (strain ATCC BAA-918 / JCM 12380 / KOD1) (Pyrococcus kodakaraensis (strain KOD1)).